The primary structure comprises 185 residues: MSRLLEESLKTCPIVKRGEYHYFIHPISDGVPLVEPELLRDVSTRVIKMIDTEVDKIVTAEAMGIPIVTAVSIATDIPYVIMRKREYLLEGEIPVHQETGYSKGELYLNGINKGDKVVILDDVISTGGTLVAIINALKRAGADIKDVLCIIDRGNGQNVVEEKTGYKVKTLVKIEVVDGKVQILE.

It belongs to the purine/pyrimidine phosphoribosyltransferase family. Archaeal HPRT subfamily. As to quaternary structure, homodimer.

It is found in the cytoplasm. It catalyses the reaction IMP + diphosphate = hypoxanthine + 5-phospho-alpha-D-ribose 1-diphosphate. The enzyme catalyses GMP + diphosphate = guanine + 5-phospho-alpha-D-ribose 1-diphosphate. The protein operates within purine metabolism; IMP biosynthesis via salvage pathway; IMP from hypoxanthine: step 1/1. Its function is as follows. Catalyzes a salvage reaction resulting in the formation of IMP that is energically less costly than de novo synthesis. The chain is Hypoxanthine/guanine phosphoribosyltransferase from Methanococcus maripaludis (strain C6 / ATCC BAA-1332).